The following is a 234-amino-acid chain: Phosphoribosylaminoimidazole-succinocarboxamide synthase (234 aa).

The protein belongs to the SAICAR synthetase family.

It catalyses the reaction 5-amino-1-(5-phospho-D-ribosyl)imidazole-4-carboxylate + L-aspartate + ATP = (2S)-2-[5-amino-1-(5-phospho-beta-D-ribosyl)imidazole-4-carboxamido]succinate + ADP + phosphate + 2 H(+). The protein operates within purine metabolism; IMP biosynthesis via de novo pathway; 5-amino-1-(5-phospho-D-ribosyl)imidazole-4-carboxamide from 5-amino-1-(5-phospho-D-ribosyl)imidazole-4-carboxylate: step 1/2. This is Phosphoribosylaminoimidazole-succinocarboxamide synthase from Streptococcus pyogenes serotype M18 (strain MGAS8232).